Reading from the N-terminus, the 620-residue chain is Chaperone protein DnaK (620 aa).

Thr-197 bears the Phosphothreonine; by autocatalysis mark. A disordered region spans residues 591-620; the sequence is AQKLGEAMANKNNAEQPKKKDDDVIDAEVE.

This sequence belongs to the heat shock protein 70 family.

Its function is as follows. Acts as a chaperone. The sequence is that of Chaperone protein DnaK from Helicobacter pylori (strain HPAG1).